A 419-amino-acid chain; its full sequence is Putative BTB/POZ domain-containing protein L85 (419 aa).

The region spanning 16–89 (TDLTIVLKDD…FYDKTSTNSE (74 aa)) is the BTB domain. Positions 250–290 (SSSNDSDEDASETESEHNSETESEHNSETESEHNSETESKH) are disordered. The segment covering 263-290 (ESEHNSETESEHNSETESEHNSETESKH) has biased composition (basic and acidic residues).

It belongs to the mimivirus BTB/WD family.

This is Putative BTB/POZ domain-containing protein L85 from Acanthamoeba polyphaga (Amoeba).